The chain runs to 368 residues: MSSLRRRIETVMRSGPDENMGLTGAVLRLVSLVYGLVMRLRYKLYQKGFFKTGKAPCMVVSVGNITVGGTGKTPMAIYLARLFNDWGLNVAIASRGYGGTMQKQGGAASDGKDILLTPAEAGDEPWLMAVKLPGVPVVVGGDRVKSANLCASQFGTRILILDDAFSRLAIDRDLNLLLVDSQAPFGNGHVFPRGLLREPAEFASRADAVIRTRADRGAGQAALPQGKPVFSCTHKPKGFLEYFPQKGTSGPKIVRHSLDDLKGKKVAAFAGIADNQGFFDGLSSLGVAVLDRLSFPDHHAYTLRDRNIIVETAIKADVKALITTEKDLVRLTGWDAHGLDLYALEIALEFEQAQKFEDFLKSKLQIGE.

66-73 (TVGGTGKT) contacts ATP.

Belongs to the LpxK family.

The enzyme catalyses a lipid A disaccharide + ATP = a lipid IVA + ADP + H(+). It functions in the pathway glycolipid biosynthesis; lipid IV(A) biosynthesis; lipid IV(A) from (3R)-3-hydroxytetradecanoyl-[acyl-carrier-protein] and UDP-N-acetyl-alpha-D-glucosamine: step 6/6. In terms of biological role, transfers the gamma-phosphate of ATP to the 4'-position of a tetraacyldisaccharide 1-phosphate intermediate (termed DS-1-P) to form tetraacyldisaccharide 1,4'-bis-phosphate (lipid IVA). The polypeptide is Tetraacyldisaccharide 4'-kinase (Desulfatibacillum aliphaticivorans).